The following is a 335-amino-acid chain: Ferrochelatase (335 aa).

Fe cation is bound by residues histidine 207 and glutamate 288.

Belongs to the ferrochelatase family.

The protein localises to the cytoplasm. The enzyme catalyses heme b + 2 H(+) = protoporphyrin IX + Fe(2+). It functions in the pathway porphyrin-containing compound metabolism; protoheme biosynthesis; protoheme from protoporphyrin-IX: step 1/1. In terms of biological role, catalyzes the ferrous insertion into protoporphyrin IX. The protein is Ferrochelatase of Helicobacter pylori (strain HPAG1).